We begin with the raw amino-acid sequence, 215 residues long: Probable GTP-binding protein EngB (215 aa).

Residues 30–204 (EGLEVAFAGR…QMVLAQWLGL (175 aa)) enclose the EngB-type G domain. GTP-binding positions include 38–45 (GRSNAGKS), 64–68 (GRTQL), 82–85 (DLPG), 149–152 (TKAD), and 182–185 (LFSA). Mg(2+) contacts are provided by serine 45 and threonine 66.

It belongs to the TRAFAC class TrmE-Era-EngA-EngB-Septin-like GTPase superfamily. EngB GTPase family. Mg(2+) is required as a cofactor.

In terms of biological role, necessary for normal cell division and for the maintenance of normal septation. In Pseudomonas aeruginosa (strain ATCC 15692 / DSM 22644 / CIP 104116 / JCM 14847 / LMG 12228 / 1C / PRS 101 / PAO1), this protein is Probable GTP-binding protein EngB.